Reading from the N-terminus, the 286-residue chain is 2-hydroxy-6-oxo-6-phenylhexa-2,4-dienoate hydrolase (286 aa).

Substrate-binding positions include 42–43 (GG), Asn51, Lys111, Ser180, and Arg190. In terms of domain architecture, AB hydrolase-1 spans 173–271 (NVFLFDQSLI…RCVHWAQWEH (99 aa)). His265 functions as the Proton acceptor in the catalytic mechanism. Trp266 serves as a coordination point for substrate.

It belongs to the AB hydrolase superfamily. BphD family. In terms of assembly, homodimer.

It carries out the reaction 2,6-dioxo-6-phenylhexa-3-enoate + H2O = 2-oxopent-4-enoate + benzoate + H(+). It participates in xenobiotic degradation; biphenyl degradation; 2-hydroxy-2,4-pentadienoate and benzoate from biphenyl: step 4/4. Its function is as follows. Catalyzes an unusual C-C bond hydrolysis of 2-hydroxy-6-oxo-6-phenylhexa-2,4-dienoic acid (HOPDA) to produce benzoic acid and 2-hydroxy-2,4-pentadienoic acid (HPD). The chain is 2-hydroxy-6-oxo-6-phenylhexa-2,4-dienoate hydrolase from Delftia acidovorans (Pseudomonas acidovorans).